A 294-amino-acid chain; its full sequence is Equatorin (294 aa).

The N-terminal stretch at 1–14 (MNFILFIFIPGVFS) is a signal peptide. The Vesicular portion of the chain corresponds to 15 to 181 (LKSSTLKPTI…QPDLEDLKIK (167 aa)). N76 is a glycosylation site (N-linked (GlcNAc...) asparagine). A disordered region spans residues 107 to 126 (KSTIEEETTTSEPSHKNIQR). N143 is a glycosylation site (N-linked (GlcNAc...) asparagine). Residues 182 to 202 (IMLGISLMTLLLFVVLLAFCS) traverse the membrane as a helical segment. At 203–294 (ATLYKLRHLS…MHENDESVTR (92 aa)) the chain is on the cytoplasmic side.

Interacts with SNAP25. Highly N- and O-glycosylated; contains sialic acid. As to expression, isoform 1 is highly expressed in testis. Isoform 2 is expressed at low levels in skin and blood.

It localises to the cytoplasmic vesicle. Its subcellular location is the secretory vesicle. The protein resides in the acrosome membrane. The protein localises to the acrosome inner membrane. It is found in the acrosome outer membrane. Acrosomal membrane-anchored protein involved in the process of fertilization and in acrosome biogenesis. The sequence is that of Equatorin (EQTN) from Homo sapiens (Human).